Consider the following 680-residue polypeptide: Nodulation protein NolNO (680 aa).

It belongs to the NodU/CmcH family.

Its subcellular location is the cytoplasm. In terms of biological role, involved in the O-carbamoylation of nod factors. The protein is Nodulation protein NolNO (nolO) of Sinorhizobium fredii (strain NBRC 101917 / NGR234).